The primary structure comprises 850 residues: Trimethylguanosine synthase (850 aa).

The disordered stretch occupies residues 54-85 (NNAGDRVTEEEEDDHSSGTTESHSADEGDLDP). At Thr-61 the chain carries Phosphothreonine. Ser-92 and Ser-152 each carry phosphoserine. Disordered regions lie at residues 278–311 (DQNAESSLKADGTTLSSSPNTAEDESLGSNDNDH), 327–454 (EVEQ…GGIP), and 523–566 (ISQE…PENC). Residues 363 to 374 (TPKESDISENRS) show a composition bias toward basic and acidic residues. Residues 375-390 (SDQPAQELQESSGTNT) show a composition bias toward polar residues. Phosphoserine is present on residues Ser-405 and Ser-431. Acidic residues predominate over residues 424–435 (DIDENPDSEVDD). Basic and acidic residues predominate over residues 548–562 (SMEKTDGLMETRDPE). Ser-571 is subject to Phosphoserine. A disordered region spans residues 595-628 (TEGVANSPRAEAEVEIKKKKKKKKKNKNKKINGL). A compositionally biased stretch (basic residues) spans 611–624 (KKKKKKKKKNKNKK). Residue Asp-713 coordinates S-adenosyl-L-methionine.

The protein belongs to the methyltransferase superfamily. Trimethylguanosine synthase family. May form homooligomers. Interacts with CREBBP/CBP, EED/WAIT1, EP300/P300, NCOA6/PRIP, PPARBP/PBP and SMN. In terms of tissue distribution, a 55 kDa isoform is widely expressed while a 90 kDa isoform is detected exclusively in brain and testis (at protein level).

The protein resides in the cytoplasm. It localises to the nucleus. It is found in the cajal body. The protein localises to the nucleolus. It catalyses the reaction a 5'-end (N(7)-methyl 5'-triphosphoguanosine)-ribonucleoside in snRNA + S-adenosyl-L-methionine = a 5'-end (N(2),N(7)-dimethyl 5'-triphosphoguanosine)-ribonucleoside in snRNA + S-adenosyl-L-homocysteine + H(+). It carries out the reaction a 5'-end (N(7)-methyl 5'-triphosphoguanosine)-ribonucleoside in snoRNA + S-adenosyl-L-methionine = a 5'-end (N(2),N(7)-dimethyl 5'-triphosphoguanosine)-ribonucleoside in snoRNA + S-adenosyl-L-homocysteine + H(+). The enzyme catalyses a 5'-end (N(2),N(7)-dimethyl 5'-triphosphoguanosine)-ribonucleoside in snRNA + S-adenosyl-L-methionine = a 5'-end (N(2),N(2),N(7)-trimethyl 5'-triphosphoguanosine)-ribonucleoside in snRNA + S-adenosyl-L-homocysteine + H(+). The catalysed reaction is a 5'-end (N(2),N(7)-dimethyl 5'-triphosphoguanosine)-ribonucleoside in snoRNA + S-adenosyl-L-methionine = a 5'-end (N(2),N(2),N(7)-trimethyl 5'-triphosphoguanosine)-ribonucleoside in snoRNA + S-adenosyl-L-homocysteine + H(+). In terms of biological role, catalyzes the 2 serial methylation steps for the conversion of the 7-monomethylguanosine (m(7)G) caps of snRNAs and snoRNAs to a 2,2,7-trimethylguanosine (m(2,2,7)G) cap structure. The enzyme is specific for guanine, and N7 methylation must precede N2 methylation. Hypermethylation of the m7G cap of U snRNAs leads to their concentration in nuclear foci, their colocalization with coilin and the formation of canonical Cajal bodies (CBs). Plays a role in transcriptional regulation. In Rattus norvegicus (Rat), this protein is Trimethylguanosine synthase.